The sequence spans 422 residues: UDP-N-acetylglucosamine 1-carboxyvinyltransferase (422 aa).

22–23 (KN) contributes to the phosphoenolpyruvate binding site. Residue R93 participates in UDP-N-acetyl-alpha-D-glucosamine binding. The active-site Proton donor is the C117. At C117 the chain carries 2-(S-cysteinyl)pyruvic acid O-phosphothioketal. Residues 122-126 (RPVDL), D308, and L330 each bind UDP-N-acetyl-alpha-D-glucosamine.

It belongs to the EPSP synthase family. MurA subfamily.

It localises to the cytoplasm. The enzyme catalyses phosphoenolpyruvate + UDP-N-acetyl-alpha-D-glucosamine = UDP-N-acetyl-3-O-(1-carboxyvinyl)-alpha-D-glucosamine + phosphate. Its pathway is cell wall biogenesis; peptidoglycan biosynthesis. In terms of biological role, cell wall formation. Adds enolpyruvyl to UDP-N-acetylglucosamine. The protein is UDP-N-acetylglucosamine 1-carboxyvinyltransferase of Helicobacter pylori (strain J99 / ATCC 700824) (Campylobacter pylori J99).